The primary structure comprises 436 residues: ATP-dependent 6-phosphofructokinase (436 aa).

Residues Gly-90, 155–156 (RG), and 180–183 (GDGT) each bind ATP. Asp-181 serves as a coordination point for Mg(2+). Substrate is bound by residues 209–211 (TID), 254–256 (MGR), Glu-307, and 362–365 (YMIR). Asp-211 serves as the catalytic Proton acceptor.

It belongs to the phosphofructokinase type A (PFKA) family. PPi-dependent PFK group II subfamily. Atypical ATP-dependent clade 'X' sub-subfamily. As to quaternary structure, homodimer. Aggregates to a homotetramer after activation by ATP. The cofactor is Mg(2+).

The protein localises to the cytoplasm. The catalysed reaction is beta-D-fructose 6-phosphate + ATP = beta-D-fructose 1,6-bisphosphate + ADP + H(+). It functions in the pathway carbohydrate degradation; glycolysis; D-glyceraldehyde 3-phosphate and glycerone phosphate from D-glucose: step 3/4. Its activity is regulated as follows. Activated by nucleoside triphosphates. Inhibited by phosphoenolpyruvate. EDTA and biphosphonates play the role of inhibitors of kinase activity. Catalyzes the phosphorylation of D-fructose 6-phosphate to fructose 1,6-bisphosphate by ATP, the first committing step of glycolysis. The chain is ATP-dependent 6-phosphofructokinase (PPi-PFK) from Entamoeba histolytica (strain ATCC 30459 / HM-1:IMSS / ABRM).